A 629-amino-acid chain; its full sequence is UvrABC system protein C (629 aa).

One can recognise a GIY-YIG domain in the interval 12–91; it reads DRPGCYLFKD…IKKHKPKYNI (80 aa). The UVR domain maps to 200-235; it reads QEVLERLRARMEQAAERLEFERAAELRDQIRAIEKV.

Belongs to the UvrC family. In terms of assembly, interacts with UvrB in an incision complex.

Its subcellular location is the cytoplasm. Its function is as follows. The UvrABC repair system catalyzes the recognition and processing of DNA lesions. UvrC both incises the 5' and 3' sides of the lesion. The N-terminal half is responsible for the 3' incision and the C-terminal half is responsible for the 5' incision. This Symbiobacterium thermophilum (strain DSM 24528 / JCM 14929 / IAM 14863 / T) protein is UvrABC system protein C.